Consider the following 535-residue polypeptide: uncharacterized protein (535 aa).

Disordered regions lie at residues 1–58 (MSMK…PRGP), 211–254 (EPPK…PPCI), 313–353 (RRVA…EQVK), 376–416 (RPDK…DQRL), 421–440 (QGLDSGAMDDDTYNPYDAAW), and 508–535 (SLFEHTKEKKRGGDGGDSRGESKRSRRD). Positions 22–34 (IRRDPWFGGRDNE) are enriched in basic and acidic residues. The interval 179–342 (AQYIRYTPSQ…KARQERSAMR (164 aa)) is SNW. Basic and acidic residues predominate over residues 376–393 (RPDKADKLRKERERDISE). Residues 511–535 (EHTKEKKRGGDGGDSRGESKRSRRD) are compositionally biased toward basic and acidic residues.

It belongs to the SNW family.

This is an uncharacterized protein from Caenorhabditis elegans.